The chain runs to 318 residues: Formimidoylglutamase (318 aa).

Residues His130, Asp155, His157, Asp159, Asp246, and Asp248 each coordinate Mn(2+).

The protein belongs to the arginase family. The cofactor is Mn(2+).

The enzyme catalyses N-formimidoyl-L-glutamate + H2O = formamide + L-glutamate. Its pathway is amino-acid degradation; L-histidine degradation into L-glutamate; L-glutamate from N-formimidoyl-L-glutamate (hydrolase route): step 1/1. Catalyzes the conversion of N-formimidoyl-L-glutamate to L-glutamate and formamide. The polypeptide is Formimidoylglutamase (Photorhabdus laumondii subsp. laumondii (strain DSM 15139 / CIP 105565 / TT01) (Photorhabdus luminescens subsp. laumondii)).